Consider the following 172-residue polypeptide: Large ribosomal subunit protein uL10 (172 aa).

It belongs to the universal ribosomal protein uL10 family. In terms of assembly, part of the ribosomal stalk of the 50S ribosomal subunit. The N-terminus interacts with L11 and the large rRNA to form the base of the stalk. The C-terminus forms an elongated spine to which L12 dimers bind in a sequential fashion forming a multimeric L10(L12)X complex.

Its function is as follows. Forms part of the ribosomal stalk, playing a central role in the interaction of the ribosome with GTP-bound translation factors. The polypeptide is Large ribosomal subunit protein uL10 (Rhodopseudomonas palustris (strain HaA2)).